Consider the following 287-residue polypeptide: 4-hydroxybenzoate octaprenyltransferase (287 aa).

9 helical membrane passes run 21–41, 44–64, 91–111, 112–132, 139–159, 160–180, 211–231, 235–255, and 263–283; these read VGIFLLLWPTLWAVWIAAKGA, FKIAVIFIAGSVVMRAAGCIV, VTEAMLLFAVLSLIAFTLVLL, LNRLTVELAVIGILLALVYPF, LPQLWLGIAFSWSIPMAFAAT, VGHVPAVAWLLFFAAVLWPIV, LMIGLLQGSVLLTFGLLGWYL, YWFYLGLLVALGLMCYQQFLI, and CFAAFRNNNWVGFFIFLGILL.

Belongs to the UbiA prenyltransferase family. The cofactor is Mg(2+).

It localises to the cell inner membrane. It carries out the reaction all-trans-octaprenyl diphosphate + 4-hydroxybenzoate = 4-hydroxy-3-(all-trans-octaprenyl)benzoate + diphosphate. It participates in cofactor biosynthesis; ubiquinone biosynthesis. Functionally, catalyzes the prenylation of para-hydroxybenzoate (PHB) with an all-trans polyprenyl group. Mediates the second step in the final reaction sequence of ubiquinone-8 (UQ-8) biosynthesis, which is the condensation of the polyisoprenoid side chain with PHB, generating the first membrane-bound Q intermediate 3-octaprenyl-4-hydroxybenzoate. The protein is 4-hydroxybenzoate octaprenyltransferase of Coxiella burnetii (strain CbuK_Q154) (Coxiella burnetii (strain Q154)).